Reading from the N-terminus, the 165-residue chain is uncharacterized protein (165 aa).

Belongs to the IIV-6 196R family.

This is an uncharacterized protein from Invertebrate iridescent virus 3 (IIV-3).